The chain runs to 104 residues: Holotricin-3 (104 aa).

Residues 1–20 (MNKLIILGLACIIAVASAMP) form the signal peptide. The tract at residues 22 to 104 (GPGDGHGGGH…HHGGYQTHGY (83 aa)) is disordered. Residues 23-97 (PGDGHGGGHG…PGGHGGGHHG (75 aa)) show a composition bias toward gly residues. 18 repeat units span residues 27–30 (HGGG), 31–34 (HGGG), 35–38 (HGGG), 39–42 (HGNG), 43–46 (QGGG), 47–50 (HGHG), 51–54 (PGGG), 55–58 (FGGG), 59–62 (HGGG), 63–66 (HGGG), 67–70 (GRGG), 71–74 (GGSG), 75–78 (GGGS), 79–82 (PGHG), 83–86 (AGGG), 87–90 (YPGG), 91–94 (HGGG), and 96–98 (HGG). Residues 27–98 (HGGGHGGGHG…GGHGGGHHGG (72 aa)) are 18 X 4 AA approximate tandem repeats of H-G-G-G.

The protein to T.molitor tenecin 3.

The protein localises to the secreted. Has antifungal activity against C.albicans. The protein is Holotricin-3 of Holotrichia diomphalia (Korean black chafer).